The chain runs to 194 residues: NADH-quinone oxidoreductase subunit B 1 (194 aa).

Cys47, Cys48, Cys113, and Cys142 together coordinate [4Fe-4S] cluster.

This sequence belongs to the complex I 20 kDa subunit family. NDH-1 is composed of 14 different subunits. Subunits NuoB, C, D, E, F, and G constitute the peripheral sector of the complex. [4Fe-4S] cluster is required as a cofactor.

The protein resides in the cell inner membrane. The catalysed reaction is a quinone + NADH + 5 H(+)(in) = a quinol + NAD(+) + 4 H(+)(out). Its function is as follows. NDH-1 shuttles electrons from NADH, via FMN and iron-sulfur (Fe-S) centers, to quinones in the respiratory chain. The immediate electron acceptor for the enzyme in this species is believed to be ubiquinone. Couples the redox reaction to proton translocation (for every two electrons transferred, four hydrogen ions are translocated across the cytoplasmic membrane), and thus conserves the redox energy in a proton gradient. This is NADH-quinone oxidoreductase subunit B 1 from Sorangium cellulosum (strain So ce56) (Polyangium cellulosum (strain So ce56)).